The primary structure comprises 106 residues: Large ribosomal subunit protein uL24 (106 aa).

This sequence belongs to the universal ribosomal protein uL24 family. In terms of assembly, part of the 50S ribosomal subunit.

One of two assembly initiator proteins, it binds directly to the 5'-end of the 23S rRNA, where it nucleates assembly of the 50S subunit. In terms of biological role, one of the proteins that surrounds the polypeptide exit tunnel on the outside of the subunit. The sequence is that of Large ribosomal subunit protein uL24 from Erythrobacter litoralis (strain HTCC2594).